The sequence spans 409 residues: Single Ig IL-1-related receptor (409 aa).

Topologically, residues 1-117 (MAGVCDMAPN…TLWRAGPAGH (117 aa)) are extracellular. The Ig-like C2-type domain maps to 9–108 (PNFLSPSEDQ…VWNVSSHSFT (100 aa)). N-linked (GlcNAc...) asparagine glycosylation is found at Asn-31, Asn-58, Asn-73, Asn-85, and Asn-101. Cys-32 and Cys-97 are oxidised to a cystine. A helical; Signal-anchor for type III membrane protein membrane pass occupies residues 118 to 138 (VAAVLASLLVLVVLLLVALLY). Residues 139–409 (VKCRLNMLLW…FYCLVSEDDV (271 aa)) are Cytoplasmic-facing. A TIR domain is found at 162 to 306 (KLYDAYVSYS…DFWKELQLAL (145 aa)). Residue Ser-382 is modified to Phosphoserine.

The protein belongs to the interleukin-1 receptor family. As to quaternary structure, interacts with IL1R1, IRAK1, TLR4, TLR5, TLR9 and TRAF6. Upon IL-1 stimulation found in a complex at least composed of IL1R1, SIGIRR, MYD88, IRAK1 and TRAF6. Upon stimulation with LPC found in a complex at least composed of TLR4, SIG1IR, MYD88, IRAK1 and TRAF6. Interacts with PALM3. In terms of tissue distribution, expressed at high levels in kidney, and at moderate levels in colon, small intestine, lung, spleen and liver. Not expressed in brain and muscle. Expressed at high levels in epithelial cells, at moderate levels in splenocytes, and at low or undetectable levels in fibroblasts or endothelial cells. Expressed in mucosal and dendritic cells.

It localises to the membrane. In terms of biological role, acts as a negative regulator of the Toll-like and IL-1R receptor signaling pathways. Attenuates the recruitment of receptor-proximal signaling components to the TLR4 receptor, probably through an TIR-TIR domain interaction with TLR4. Through its extracellular domain interferes with the heterodimerization of Il1R1 and IL1RAP. The sequence is that of Single Ig IL-1-related receptor (Sigirr) from Mus musculus (Mouse).